We begin with the raw amino-acid sequence, 549 residues long: Glucose-6-phosphate isomerase (549 aa).

Glu353 functions as the Proton donor in the catalytic mechanism. Residues His384 and Lys513 contribute to the active site.

It belongs to the GPI family.

The protein localises to the cytoplasm. It carries out the reaction alpha-D-glucose 6-phosphate = beta-D-fructose 6-phosphate. Its pathway is carbohydrate biosynthesis; gluconeogenesis. It participates in carbohydrate degradation; glycolysis; D-glyceraldehyde 3-phosphate and glycerone phosphate from D-glucose: step 2/4. Its function is as follows. Catalyzes the reversible isomerization of glucose-6-phosphate to fructose-6-phosphate. In Brucella canis (strain ATCC 23365 / NCTC 10854 / RM-666), this protein is Glucose-6-phosphate isomerase.